Consider the following 423-residue polypeptide: Replication factor C large subunit (423 aa).

Position 50–57 (50–57 (GPAGCGKT)) interacts with ATP.

This sequence belongs to the activator 1 small subunits family. RfcL subfamily. As to quaternary structure, heteromultimer composed of small subunits (RfcS) and large subunits (RfcL).

Part of the RFC clamp loader complex which loads the PCNA sliding clamp onto DNA. This chain is Replication factor C large subunit, found in Staphylothermus marinus (strain ATCC 43588 / DSM 3639 / JCM 9404 / F1).